A 149-amino-acid chain; its full sequence is Potassium binding protein Kbp (149 aa).

In terms of domain architecture, BON spans 23–91 (DKDDQAKKVQ…SVDDQVKTAT (69 aa)). A LysM domain is found at 97–146 (QFYTVKSGDTLSAISKQVYGNANLYNKIFEANKPMLKSPDKIYPGQVLRI).

It localises to the cytoplasm. Its function is as follows. Highly specific potassium binding protein that is required for normal growth in the presence of high levels of external K(+). May act as a sensor of cytoplasmic K(+) concentration. This Escherichia coli O6:H1 (strain CFT073 / ATCC 700928 / UPEC) protein is Potassium binding protein Kbp.